The chain runs to 59 residues: Putative potassium channel toxin Ts25 (59 aa).

A signal peptide spans 1–22; that stretch reads MKAFYGILIIFILISMIHLSQQ. Cystine bridges form between cysteine 29–cysteine 50, cysteine 35–cysteine 55, and cysteine 39–cysteine 57.

This sequence belongs to the short scorpion toxin superfamily. Potassium channel inhibitor family. Alpha-KTx 04 subfamily. As to expression, expressed by the venom gland.

The protein resides in the secreted. Potently blocks Kv1.1/KCNA1 (85%), Kv1.2/KCNA2 (91%), Kv1.3/KCNA3 (89%), Kv1.6/KCNA6 (94%), and Shaker (97%). This is Putative potassium channel toxin Ts25 from Tityus serrulatus (Brazilian scorpion).